Here is a 2240-residue protein sequence, read N- to C-terminus: Nonribisomal peptide synthetase notE (2240 aa).

The disordered stretch occupies residues 22–52 (TETMRETLSSSSSPLSLSSITSPLSSASEPP). Low complexity predominate over residues 28–52 (TLSSSSSPLSLSSITSPLSSASEPP). The adenylation 1 stretch occupies residues 85-484 (QQRCREAPES…GRKEGQVKIR (400 aa)). A Carrier 1 domain is found at 616–692 (PPTTATEHAL…EQARKATPVS (77 aa)). Ser-653 carries the post-translational modification O-(pantetheine 4'-phosphoryl)serine. Residues 732 to 1144 (EDIFPCTPLQ…DFASPQDRDL (413 aa)) are condensation 1. Residues 1167–1564 (QEARQPSREA…GRRDTQLKLR (398 aa)) are adenylation 2. The Carrier 2 domain maps to 1700–1776 (PVSRGPELRL…ELARCTGEEP (77 aa)). At Ser-1737 the chain carries O-(pantetheine 4'-phosphoryl)serine. The interval 1845-2159 (FSFHGEVSVE…ILQHQNIDMD (315 aa)) is condensation 2. The segment at 2008 to 2027 (CTMPVKATPPTDSDDSRPSA) is disordered.

The protein belongs to the NRP synthetase family.

The enzyme catalyses L-proline + L-tryptophan + 2 ATP = brevianamide F + 2 AMP + 2 diphosphate + 2 H(+). It functions in the pathway alkaloid biosynthesis. Nonribisomal peptide synthetase; part of the gene cluster that mediates the biosynthesis of notoamide, a fungal indole alkaloid that belongs to a family of natural products containing a characteristic bicyclo[2.2.2]diazaoctane core. The first step of notoamide biosynthesis involves coupling of L-proline and L-tryptophan by the bimodular NRPS notE, to produce cyclo-L-tryptophan-L-proline called brevianamide F. The reverse prenyltransferase notF then acts as a deoxybrevianamide E synthase and converts brevianamide F to deoxybrevianamide E via reverse prenylation at C-2 of the indole ring leading to the bicyclo[2.2.2]diazaoctane core. Deoxybrevianamide E is further hydroxylated at C-6 of the indole ring, likely catalyzed by the cytochrome P450 monooxygenase notG, to yield 6-hydroxy-deoxybrevianamide E. 6-hydroxy-deoxybrevianamide E is a specific substrate of the prenyltransferase notC for normal prenylation at C-7 to produce 6-hydroxy-7-prenyl-deoxybrevianamide, also called notoamide S. As the proposed pivotal branching point in notoamide biosynthesis, notoamide S can be diverted to notoamide E through an oxidative pyran ring closure putatively catalyzed by either notH cytochrome P450 monooxygenase or the notD FAD-linked oxidoreductase. This step would be followed by an indole 2,3-epoxidation-initiated pinacol-like rearrangement catalyzed by the notB FAD-dependent monooxygenase leading to the formation of notoamide C and notoamide D. On the other hand notoamide S is converted to notoamide T by notH (or notD), a bifunctional oxidase that also functions as the intramolecular Diels-Alderase responsible for generation of (+)-notoamide T. To generate antipodal (-)-notoaminide T, notH' (or notD') in Aspergillus versicolor is expected to catalyze a Diels-Alder reaction leading to the opposite stereochemistry. The remaining oxidoreductase notD (or notH) likely catalyzes the oxidative pyran ring formation to yield (+)-stephacidin A. The FAD-dependent monooxygenase notI is highly similar to notB and is predicted to catalyze a similar conversion from (+)-stephacidin A to (-)-notoamide B via the 2,3-epoxidation of (+)-stephacidin A followed by a pinacol-type rearrangement. Finally, it remains unclear which enzyme could be responsible for the final hydroxylation steps leading to notoamide A and sclerotiamide. The protein is Nonribisomal peptide synthetase notE of Aspergillus sp. (strain MF297-2).